Here is a 291-residue protein sequence, read N- to C-terminus: Omega-amidase NIT3 (291 aa).

A CN hydrolase domain is found at 11–264; that stretch reads IKVALVQLSG…EEIIYAELDP (254 aa). Threonine 34 bears the Phosphothreonine mark. Glutamate 53 functions as the Proton acceptor in the catalytic mechanism. Catalysis depends on lysine 128, which acts as the Proton donor. Cysteine 169 serves as the catalytic Nucleophile.

The protein belongs to the carbon-nitrogen hydrolase superfamily. NIT1/NIT2 family. In terms of assembly, homodimer.

It catalyses the reaction a monoamide of a dicarboxylate + H2O = a dicarboxylate + NH4(+). In terms of biological role, possesses omega-amidase activity. The role of omega-amidase is to remove potentially toxic intermediates by converting 2-oxoglutaramate and 2-oxosuccinamate to biologically useful 2-oxoglutarate and oxaloacetate, respectively. This Saccharomyces cerevisiae (strain ATCC 204508 / S288c) (Baker's yeast) protein is Omega-amidase NIT3 (NIT3).